The sequence spans 607 residues: Oligoendopeptidase F homolog (607 aa).

Residue H384 participates in Zn(2+) binding. E385 is an active-site residue. 2 residues coordinate Zn(2+): H388 and H391.

It belongs to the peptidase M3B family. Zn(2+) is required as a cofactor.

This chain is Oligoendopeptidase F homolog (pepF), found in Mycoplasma genitalium (strain ATCC 33530 / DSM 19775 / NCTC 10195 / G37) (Mycoplasmoides genitalium).